A 523-amino-acid chain; its full sequence is MGGKNKIEILFQLQSALSRRRISSLVDFRRVFPPETPNHKNNITLSRFHFLGTHFLHSLGAPDKFPNRFNDDKDKQSALDVHNIIKHHRGSSPEKIKRILDKCGIDLTEELVLEVVNRNRSDWKPAYILSQLVVKQSVHLSSSMLYNEILDVLGKMRRFEEFHQVFDEMSKRDGFVNEKTYEVLLNRYAAAHKVDEAVGVFERRKEFGIDDDLVAFHGLLMWLCRYKHVEFAETLFCSRRREFGCDIKAMNMILNGWCVLGNVHEAKRFWKDIIASKCRPDVVSYGTMINALTKKGKLGKAMELYRAMWDTRRNPDVKICNNVIDALCFKKRIPEALEVFREISEKGPDPNVVTYNSLLKHLCKIRRTEKVWELVEEMELKGGSCSPNDVTFSYLLKYSQRSKDVDIVLERMAKNKCEMTSDLYNLMFRLYVQWDKEEKVREIWSEMERSGLGPDQRTYTIRIHGLHTKGKIGEALSYFQEMMSKGMVPEPRTEMLLNQNKTKPRVEDKMLRSNLTSEESESD.

PPR repeat units lie at residues 142 to 172 (SSML…MSKR), 177 to 211 (NEKT…GIDD), 212 to 242 (DLVA…RRRE), 246 to 280 (DIKA…KCRP), 281 to 315 (DVVS…RRNP), 316 to 350 (DVKI…GPDP), 351 to 385 (NVVT…GGSC), 388 to 418 (NDVT…NKCE), 420 to 454 (TSDL…GLGP), and 455 to 489 (DQRT…GMVP). The segment at 497 to 523 (LNQNKTKPRVEDKMLRSNLTSEESESD) is disordered.

Belongs to the PPR family. P subfamily.

The chain is Putative pentatricopeptide repeat-containing protein At3g15200 from Arabidopsis thaliana (Mouse-ear cress).